A 179-amino-acid polypeptide reads, in one-letter code: Large ribosomal subunit protein uL6 (179 aa).

Belongs to the universal ribosomal protein uL6 family. In terms of assembly, part of the 50S ribosomal subunit.

Functionally, this protein binds to the 23S rRNA, and is important in its secondary structure. It is located near the subunit interface in the base of the L7/L12 stalk, and near the tRNA binding site of the peptidyltransferase center. The protein is Large ribosomal subunit protein uL6 of Chlorobium phaeovibrioides (strain DSM 265 / 1930) (Prosthecochloris vibrioformis (strain DSM 265)).